The chain runs to 351 residues: Fructose-1,6-bisphosphatase class 1 (351 aa).

Residues Glu94, Asp113, Leu115, and Asp116 each coordinate Mg(2+). Substrate contacts are provided by residues 116 to 119 and Asn207; that span reads DGSS. Glu279 serves as a coordination point for Mg(2+).

It belongs to the FBPase class 1 family. As to quaternary structure, homotetramer. It depends on Mg(2+) as a cofactor.

Its subcellular location is the cytoplasm. The catalysed reaction is beta-D-fructose 1,6-bisphosphate + H2O = beta-D-fructose 6-phosphate + phosphate. The protein operates within carbohydrate biosynthesis; gluconeogenesis. The sequence is that of Fructose-1,6-bisphosphatase class 1 from Methylobacterium radiotolerans (strain ATCC 27329 / DSM 1819 / JCM 2831 / NBRC 15690 / NCIMB 10815 / 0-1).